The sequence spans 660 residues: Bifunctional polymyxin resistance protein ArnA (660 aa).

The tract at residues 1-304 (MKTVVFAYHD…TLGLVQGSRL (304 aa)) is formyltransferase ArnAFT. 86-88 (HLI) contacts (6R)-10-formyltetrahydrofolate. His104 serves as the catalytic Proton donor; for formyltransferase activity. (6R)-10-formyltetrahydrofolate is bound by residues Arg114 and 136–140 (VKRAD). Positions 314–660 (RRTRVLILGV…RTVDLTDKPS (347 aa)) are dehydrogenase ArnADH. NAD(+) is bound by residues Asp347 and 368 to 369 (DI). Residues Ala393, Tyr398, and 432–433 (TS) each bind UDP-alpha-D-glucuronate. The Proton acceptor; for decarboxylase activity role is filled by Glu434. Residues Arg460, Asn492, 526–535 (KLIDGGKQKR), and Tyr613 each bind UDP-alpha-D-glucuronate. The Proton donor; for decarboxylase activity role is filled by Arg619.

The protein in the N-terminal section; belongs to the Fmt family. UDP-L-Ara4N formyltransferase subfamily. This sequence in the C-terminal section; belongs to the NAD(P)-dependent epimerase/dehydratase family. UDP-glucuronic acid decarboxylase subfamily. As to quaternary structure, homohexamer, formed by a dimer of trimers.

It carries out the reaction UDP-alpha-D-glucuronate + NAD(+) = UDP-beta-L-threo-pentopyranos-4-ulose + CO2 + NADH. The enzyme catalyses UDP-4-amino-4-deoxy-beta-L-arabinose + (6R)-10-formyltetrahydrofolate = UDP-4-deoxy-4-formamido-beta-L-arabinose + (6S)-5,6,7,8-tetrahydrofolate + H(+). The protein operates within nucleotide-sugar biosynthesis; UDP-4-deoxy-4-formamido-beta-L-arabinose biosynthesis; UDP-4-deoxy-4-formamido-beta-L-arabinose from UDP-alpha-D-glucuronate: step 1/3. It functions in the pathway nucleotide-sugar biosynthesis; UDP-4-deoxy-4-formamido-beta-L-arabinose biosynthesis; UDP-4-deoxy-4-formamido-beta-L-arabinose from UDP-alpha-D-glucuronate: step 3/3. It participates in bacterial outer membrane biogenesis; lipopolysaccharide biosynthesis. Bifunctional enzyme that catalyzes the oxidative decarboxylation of UDP-glucuronic acid (UDP-GlcUA) to UDP-4-keto-arabinose (UDP-Ara4O) and the addition of a formyl group to UDP-4-amino-4-deoxy-L-arabinose (UDP-L-Ara4N) to form UDP-L-4-formamido-arabinose (UDP-L-Ara4FN). The modified arabinose is attached to lipid A and is required for resistance to polymyxin and cationic antimicrobial peptides. The protein is Bifunctional polymyxin resistance protein ArnA of Shigella boydii serotype 4 (strain Sb227).